The following is a 141-amino-acid chain: Hemoglobin subunit alpha-A (141 aa).

One can recognise a Globin domain in the interval 1–141; the sequence is VLTEEDKSRV…VAKTLVSRYR (141 aa). Position 58 (histidine 58) interacts with O2. Histidine 87 is a binding site for heme b.

Belongs to the globin family. Heterotetramer of two alpha chains and two beta chains. In terms of tissue distribution, red blood cells.

Its function is as follows. Involved in oxygen transport from the lung to the various peripheral tissues. This Drymarchon melanurus erebennus (Texas indigo snake) protein is Hemoglobin subunit alpha-A.